A 1448-amino-acid polypeptide reads, in one-letter code: Glutamate receptor ionotropic, NMDA 2B (1448 aa).

The N-terminal stretch at 1–24 (MRPTEACCYLKISLIILFYMGCYA) is a signal peptide. Topologically, residues 25 to 554 (QKHPNMDIAV…SAFLEPFSAD (530 aa)) are extracellular. Cys81 and Cys316 are joined by a disulfide. The Zn(2+) site is built by His122 and Glu279. An N-linked (GlcNAc...) asparagine glycan is attached at Asn336. Intrachain disulfides connect Cys426/Cys453 and Cys433/Cys454. Residues Thr511 and Arg516 each coordinate L-glutamate. A helical transmembrane segment spans residues 555–573 (VWVMMFVMLLIVSAVAVFV). Residues 574 to 600 (FEYFSPVGYNRCLADGREPGGPSFTIG) lie on the Cytoplasmic side of the membrane. An intramembrane region (discontinuously helical) is located at residues 601–620 (KAIWLLWGLVFNNSVPVQNP). Residues 601–620 (KAIWLLWGLVFNNSVPVQNP) form a pore-forming region. The Cytoplasmic portion of the chain corresponds to 621-627 (KGTTSKI). Residues 628-643 (MVSVWAFFAVIFLASY) traverse the membrane as a helical segment. The Extracellular segment spans residues 644 to 819 (TANLAAFMIQ…LDIDNMAGVF (176 aa)). Asn685 carries an N-linked (GlcNAc...) asparagine glycan. L-glutamate-binding positions include 687–688 (ST) and Asp729. Cys743 and Cys798 are disulfide-bonded. The helical transmembrane segment at 820 to 839 (YMLAAAMALSLITFIMEHLF) threads the bilayer. The Cytoplasmic portion of the chain corresponds to 840–1448 (FWQLRHCFMG…EKLSSIESDV (609 aa)). Polar residues predominate over residues 1254–1265 (APNSKYPQSPNG). The disordered stretch occupies residues 1254-1277 (APNSKYPQSPNGKAQKRNRSKLHR). The segment covering 1267–1277 (AQKRNRSKLHR) has biased composition (basic residues).

The protein belongs to the glutamate-gated ion channel (TC 1.A.10.1) family. NR2B/GRIN2B subfamily. Heterotetramer. Forms heterotetrameric channels composed of two GluN1/zeta subunits (GRIN1), and two identical GluN2/epsilon subunits (GRIN2A, GRIN2B, GRIN2C or GRIN2D) or GluN3 subunits (GRIN3A or GRIN3B) (in vitro). In vivo, the subunit composition may depend on the expression levels of the different subunits. As to expression, detected in oocytes.

The protein localises to the cell membrane. Its subcellular location is the postsynaptic cell membrane. The catalysed reaction is Ca(2+)(in) = Ca(2+)(out). The enzyme catalyses Na(+)(in) = Na(+)(out). It catalyses the reaction K(+)(in) = K(+)(out). In terms of biological role, component of N-methyl-D-aspartate (NMDA) receptors (NMDARs) that function as heterotetrameric, ligand-gated cation channels with high calcium permeability and voltage-dependent block by Mg(2+). Channel activation requires binding of the neurotransmitter L-glutamate to the GluN2 subunit, glycine binding to the GluN1 subunit, plus membrane depolarization to eliminate channel inhibition by Mg(2+). NMDARs mediate simultaneously the potasium efflux and the influx of calcium and sodium. Each GluN2 subunit confers differential attributes to channel properties, including activation, deactivation and desensitization kinetics, pH sensitivity, Ca2(+) permeability, and binding to allosteric modulators. This Xenopus laevis (African clawed frog) protein is Glutamate receptor ionotropic, NMDA 2B.